Reading from the N-terminus, the 187-residue chain is Tetraheme c-type cytochrome CymA (187 aa).

Topologically, residues methionine 1 to lysine 12 are cytoplasmic. Residues tyrosine 13–threonine 33 traverse the membrane as a helical segment. Topologically, residues glutamine 34 to glycine 187 are periplasmic. Residues cysteine 46, cysteine 49, histidine 64, cysteine 75, cysteine 78, histidine 79, aspartate 97, cysteine 136, cysteine 139, histidine 140, cysteine 173, cysteine 176, histidine 177, and histidine 182 each contribute to the heme c site.

The protein belongs to the NapC/NirT/NrfH family. In terms of assembly, homodimer. Heme c serves as cofactor.

The protein resides in the cell inner membrane. It catalyses the reaction a quinol + 2 Fe(III)-[cytochrome c](out) = a quinone + 2 Fe(II)-[cytochrome c](out) + 2 H(+)(out). With respect to regulation, spectroscopic studies suggest that CymA requires a non-heme cofactor for quinol oxidation. In terms of biological role, quinol dehydrogenase involved in several anaerobic electron transfer pathways. Acquires electrons from the membrane quinone pool and mediates their transfer to several periplasmic terminal reductases and redox shuttles, including the fumarate reductase FccA, the small tetraheme cytochrome (STC), the c-type cytochrome MtrA, the nitrate reductase NapA (either through NapB or directly), the nitrite reductase NrfA and probably also the DmsE subunit of dimethyl sulfoxide (DMSO) reductase. Required for growth on fumarate and on DMSO, and for the reduction of iron(III), manganese(IV), nitrite and nitrate. Not essential for growth on trimethylamine-N-oxide (TMAO). This chain is Tetraheme c-type cytochrome CymA, found in Shewanella oneidensis (strain ATCC 700550 / JCM 31522 / CIP 106686 / LMG 19005 / NCIMB 14063 / MR-1).